A 392-amino-acid polypeptide reads, in one-letter code: Phospho-N-acetylmuramoyl-pentapeptide-transferase (392 aa).

11 consecutive transmembrane segments (helical) span residues 24–44 (YLTM…LLAG), 76–96 (TMGG…WFDL), 100–120 (FVWI…VDDW), 137–157 (YFWQ…CISE), 170–190 (WVQS…VPFF), 193–213 (VSYP…IVGA), 225–245 (GLAI…AYVT), 262–282 (SGEL…FLWF), 289–309 (VFMG…IAVI), 314–334 (IVLA…MLQV), and 369–389 (QVVI…LSTL).

Belongs to the glycosyltransferase 4 family. MraY subfamily. Mg(2+) is required as a cofactor.

The protein localises to the cell inner membrane. The catalysed reaction is UDP-N-acetyl-alpha-D-muramoyl-L-alanyl-gamma-D-glutamyl-meso-2,6-diaminopimeloyl-D-alanyl-D-alanine + di-trans,octa-cis-undecaprenyl phosphate = di-trans,octa-cis-undecaprenyl diphospho-N-acetyl-alpha-D-muramoyl-L-alanyl-D-glutamyl-meso-2,6-diaminopimeloyl-D-alanyl-D-alanine + UMP. It participates in cell wall biogenesis; peptidoglycan biosynthesis. In terms of biological role, catalyzes the initial step of the lipid cycle reactions in the biosynthesis of the cell wall peptidoglycan: transfers peptidoglycan precursor phospho-MurNAc-pentapeptide from UDP-MurNAc-pentapeptide onto the lipid carrier undecaprenyl phosphate, yielding undecaprenyl-pyrophosphoryl-MurNAc-pentapeptide, known as lipid I. The polypeptide is Phospho-N-acetylmuramoyl-pentapeptide-transferase (Delftia acidovorans (strain DSM 14801 / SPH-1)).